Consider the following 107-residue polypeptide: Large ribosomal subunit protein P2 (107 aa).

Positions 86 to 107 (PAAAAAEAEEEDDDDMGFGLFD) are disordered. A compositionally biased stretch (acidic residues) spans 92-101 (EAEEEDDDDM).

Belongs to the eukaryotic ribosomal protein P1/P2 family. As to quaternary structure, P1 and P2 exist as dimers at the large ribosomal subunit. Phosphorylated.

Functionally, plays an important role in the elongation step of protein synthesis. The chain is Large ribosomal subunit protein P2 from Trypanosoma brucei brucei.